We begin with the raw amino-acid sequence, 623 residues long: Transketolase (623 aa).

N-acetylmethionine is present on Met1. N6-acetyllysine is present on residues Lys6 and Lys11. Substrate is bound at residue His37. The thiamine diphosphate site is built by Ser40 and His77. The residue at position 104 (Ser104) is a Phosphoserine. 123–125 is a thiamine diphosphate binding site; sequence GSL. Lys144 bears the N6-acetyllysine mark. A Mg(2+)-binding site is contributed by Asp155. Gly156 and Asn185 together coordinate thiamine diphosphate. Mg(2+) contacts are provided by Asn185 and Leu187. An N6-acetyllysine mark is found at Lys204, Lys232, and Lys241. Residues Lys244 and His258 each contribute to the thiamine diphosphate site. His258 contributes to the substrate binding site. Lys260 carries the N6-acetyllysine modification. Tyr275 is modified (phosphotyrosine). Thr287 carries the post-translational modification Phosphothreonine. Ser295 is subject to Phosphoserine. The substrate site is built by Arg318 and Ser345. Residue Ser345 is modified to Phosphoserine. Residue Lys352 forms a Glycyl lysine isopeptide (Lys-Gly) (interchain with G-Cter in SUMO2) linkage. The active-site Proton donor is the Glu366. Phe392 provides a ligand contact to thiamine diphosphate. The substrate site is built by His416 and Asp424. Gln428 provides a ligand contact to thiamine diphosphate. Substrate is bound at residue Arg474. 2 positions are modified to N6-acetyllysine: Lys538 and Lys603.

Belongs to the transketolase family. In terms of assembly, homodimer. Mg(2+) serves as cofactor. It depends on Ca(2+) as a cofactor. The cofactor is Mn(2+). Co(2+) is required as a cofactor. Requires thiamine diphosphate as cofactor.

It catalyses the reaction D-sedoheptulose 7-phosphate + D-glyceraldehyde 3-phosphate = aldehydo-D-ribose 5-phosphate + D-xylulose 5-phosphate. Its function is as follows. Catalyzes the transfer of a two-carbon ketol group from a ketose donor to an aldose acceptor, via a covalent intermediate with the cofactor thiamine pyrophosphate. This is Transketolase (Tkt) from Rattus norvegicus (Rat).